Consider the following 75-residue polypeptide: Ferredoxin-thioredoxin reductase, variable chain (75 aa).

The tract at residues 43 to 46 is interaction with ferredoxin; the sequence is QGRP.

It belongs to the ferredoxin thioredoxin reductase alpha subunit family. Heterodimer of subunit A (variable subunit) and subunit B (catalytic subunit). Heterodimeric FTR forms a complex with ferredoxin and thioredoxin.

Its function is as follows. Variable subunit of the ferredoxin-thioredoxin reductase (FTR), which catalyzes the two-electron reduction of thioredoxins by the electrons provided by reduced ferredoxin. This Synechocystis sp. (strain ATCC 27184 / PCC 6803 / Kazusa) protein is Ferredoxin-thioredoxin reductase, variable chain (ftrV).